The sequence spans 434 residues: Nicotinate phosphoribosyltransferase (434 aa).

Histidine 242 bears the Phosphohistidine; by autocatalysis mark.

This sequence belongs to the NAPRTase family. Transiently phosphorylated on a His residue during the reaction cycle. Phosphorylation strongly increases the affinity for substrates and increases the rate of nicotinate D-ribonucleotide production. Dephosphorylation regenerates the low-affinity form of the enzyme, leading to product release.

The catalysed reaction is nicotinate + 5-phospho-alpha-D-ribose 1-diphosphate + ATP + H2O = nicotinate beta-D-ribonucleotide + ADP + phosphate + diphosphate. It functions in the pathway cofactor biosynthesis; NAD(+) biosynthesis; nicotinate D-ribonucleotide from nicotinate: step 1/1. Catalyzes the synthesis of beta-nicotinate D-ribonucleotide from nicotinate and 5-phospho-D-ribose 1-phosphate at the expense of ATP. The chain is Nicotinate phosphoribosyltransferase from Chelativorans sp. (strain BNC1).